The chain runs to 521 residues: Protein translocase subunit SecD (521 aa).

6 helical membrane-spanning segments follow: residues 8 to 28 (LKLA…LPNG), 359 to 379 (AGIL…VLFY), 388 to 408 (IALL…EATL), 410 to 430 (LPGM…NILI), 459 to 479 (IVDS…FGTG), and 483 to 503 (GFAL…LLLS).

Belongs to the SecD/SecF family. SecD subfamily. In terms of assembly, forms a complex with SecF. Part of the essential Sec protein translocation apparatus which comprises SecA, SecYEG and auxiliary proteins SecDF-YajC and YidC.

Its subcellular location is the cell inner membrane. In terms of biological role, part of the Sec protein translocase complex. Interacts with the SecYEG preprotein conducting channel. SecDF uses the proton motive force (PMF) to complete protein translocation after the ATP-dependent function of SecA. The polypeptide is Protein translocase subunit SecD (Acetobacter pasteurianus (strain NBRC 105184 / IFO 3283-01)).